Consider the following 130-residue polypeptide: MVRQVKKSSLKKNKKVAANGVVHIQSTFNNTIVTLSTLEGDTVAWASSGAIGFKGAKKGTPFAAQIAAEKATKEAISQGMKKAEVLINGPGSGRETAIRALQAAGLEITLIRDITPVPHNGCRPPKKLRV.

It belongs to the universal ribosomal protein uS11 family. As to quaternary structure, part of the 30S ribosomal subunit.

It localises to the plastid. It is found in the chloroplast. The protein is Small ribosomal subunit protein uS11c of Guillardia theta (Cryptophyte).